Consider the following 394-residue polypeptide: Salivary plasminogen activator gamma (394 aa).

The first 36 residues, 1-36, serve as a signal peptide directing secretion; that stretch reads MVNTMKTKLLCVLLLCGAVFSLPRQETYRQLARGSR. One can recognise a Kringle domain in the interval 45–126; the sequence is CYKDQGVTYR…TSESCSVPVC (82 aa). 9 disulfide bridges follow: Cys-45-Cys-126, Cys-66-Cys-108, Cys-97-Cys-121, Cys-131-Cys-262, Cys-174-Cys-190, Cys-182-Cys-251, Cys-276-Cys-351, Cys-308-Cys-324, and Cys-341-Cys-369. The region spanning 143–393 is the Peptidase S1 domain; the sequence is STGGLFTDIT…YLGWIRDNMR (251 aa). Catalysis depends on charge relay system residues His-189 and Asp-238. Asn-315 carries N-linked (GlcNAc...) asparagine glycosylation. Ser-345 functions as the Charge relay system in the catalytic mechanism.

It belongs to the peptidase S1 family. Monomer.

The protein resides in the secreted. The enzyme catalyses Specific cleavage of Arg-|-Val bond in plasminogen to form plasmin.. Functionally, probably essential to support the feeding habits of this exclusively haematophagous animal. Probable potent thrombolytic agent. The protein is Salivary plasminogen activator gamma of Desmodus rotundus (Vampire bat).